Here is a 179-residue protein sequence, read N- to C-terminus: Cellular nucleic acid-binding protein homolog (179 aa).

7 consecutive CCHC-type zinc fingers follow at residues 17-34, 36-53, 58-75, 83-100, 116-133, 135-152, and 157-174; these read PRCYNCGENGHQARECTK, SICYNCNQTGHKASECTE, KTCYACGTAGHLVRDCPS, AECYKCGRVGHIARDCRT, MNCYACGSYGHQARDCTM, VKCYSCGKIGHRSFECQQ, and QLCYKCNQPGHIAVNCTS.

This sequence to human CNBP and to retroviral nucleic acid binding proteins (NBP). In terms of processing, phosphorylated.

The protein localises to the nucleus. Its function is as follows. Acts in the sexual differentiation pathway. Is required for efficient conjugation. Double-stranded DNA-binding protein. This is Cellular nucleic acid-binding protein homolog (byr3) from Schizosaccharomyces pombe (strain 972 / ATCC 24843) (Fission yeast).